The sequence spans 71 residues: Large ribosomal subunit protein bL31 (71 aa).

Cys-16, Cys-18, Cys-37, and Cys-40 together coordinate Zn(2+).

It belongs to the bacterial ribosomal protein bL31 family. Type A subfamily. As to quaternary structure, part of the 50S ribosomal subunit. Zn(2+) serves as cofactor.

Its function is as follows. Binds the 23S rRNA. The sequence is that of Large ribosomal subunit protein bL31 from Pectobacterium atrosepticum (strain SCRI 1043 / ATCC BAA-672) (Erwinia carotovora subsp. atroseptica).